A 1060-amino-acid polypeptide reads, in one-letter code: Bumetanide-sensitive sodium-(potassium)-chloride cotransporter (1060 aa).

The Cytoplasmic portion of the chain corresponds to 1–122 (MNDENRFNVS…KSPTPAVGIK (122 aa)). 2 consecutive transmembrane segments (helical) span residues 123 to 143 (LGWI…VMLF) and 154 to 174 (GIGL…ITTL). Topologically, residues 175–197 (SMSAICTNGEVKGGGIYYIISRS) are cytoplasmic. A run of 2 helical transmembrane segments spans residues 198 to 218 (LGPE…AVAA) and 250 to 270 (IVGT…MDWE). The Cytoplasmic portion of the chain corresponds to 271 to 275 (SKAQN). Transmembrane regions (helical) follow at residues 276 to 296 (FLIA…IMGP) and 332 to 352 (FFSV…GANI). Residues 353-367 (SGDLKDPASAIPKGT) lie on the Cytoplasmic side of the membrane. Residues 368–388 (LLALLISMVSYTLMVLFAGGG) form a helical membrane-spanning segment. Residues Asn396, Asn404, and Asn419 are each glycosylated (N-linked (GlcNAc...) asparagine). Residues 432 to 452 (VMQLMSAWGPFIYGGCWAATL) traverse the membrane as a helical segment. Residues 453 to 497 (STALTNLLSVPRLIQALGVDRIYPGLIFFSKPYGRHGEPYRGYVL) lie on the Cytoplasmic side of the membrane. 2 consecutive transmembrane segments (helical) span residues 498-518 (TFFV…APLI) and 563-583 (CVAI…AIFF). The Cytoplasmic portion of the chain corresponds to 584-642 (TLYLIVHYRRPDVNWGSSTQAQMYKTALSSAHALARTGEHVKNYWPQLLVLAGRPQARP). Residues 643-663 (ALVDLGNLISKAGSLMIVGDI) traverse the membrane as a helical segment. An N-linked (GlcNAc...) asparagine glycan is attached at Asn816. The helical transmembrane segment at 882 to 902 (TLDVWWLYDDGGLTILLPYII) threads the bilayer. At 903 to 1060 (SQRSAWANCK…NHTSVLTFYS (158 aa)) the chain is on the cytoplasmic side.

This sequence belongs to the SLC12A transporter family.

The protein resides in the membrane. Functionally, electrically silent transporter system. Mediates sodium and chloride reabsorption. Plays a vital role in the regulation of ionic balance and cell volume. The chain is Bumetanide-sensitive sodium-(potassium)-chloride cotransporter from Manduca sexta (Tobacco hawkmoth).